The chain runs to 414 residues: WW domain-containing oxidoreductase (414 aa).

Positions 1–24 (MAALRYAGLDDTDSEDELPPGWEE) are disordered. Residue Thr-12 is modified to Phosphothreonine. At Ser-14 the chain carries Phosphoserine. A WW 1 domain is found at 16–49 (DELPPGWEERTTKDGWVYYANHTEEKTQWEHPKT). Tyr-33 carries the phosphotyrosine modification. The Nuclear localization signal signature appears at 50–55 (GKRKRV). One can recognise a WW 2 domain in the interval 57–90 (GDLPYGWEQGTDENGQVFFVDHINKRTTYLDPRL). Positions 125–414 (KVVVVTGANS…IQERLGSQSG (290 aa)) are interaction with MAPT. 131–137 (GANSGIG) contributes to the NADP(+) binding site. The tract at residues 209–273 (CNAATFALPW…RFTDINDSLG (65 aa)) is mediates targeting to the mitochondria. Ser-260 lines the substrate pocket. Tyr-287 carries the phosphotyrosine; by TNK2 modification. The active-site Proton acceptor is the Tyr-293.

This sequence belongs to the short-chain dehydrogenases/reductases (SDR) family. Interacts with TP53, p73/TP73 and MAPK8. Interacts with MAPT/TAU, RUNX2 and HYAL2. Forms a ternary complex with TP53 and MDM2. Interacts with ERBB4, LITAF and WBP1. Interacts with DVL1, DVL2 and DVL3. May interact with FAM189B and SCOTIN. Interacts with TNK2. Interacts with TMEM207. Interacts (via WW domain) with VOPP1. Phosphorylated upon genotoxic stress. Phosphorylation of Tyr-33 regulates interaction with TP53, TP73 and MAPK8. May also regulate proapoptotic activity. Phosphorylation by TNK2 is associated with polyubiquitination and degradation. In terms of processing, ubiquitinated when phosphorylated by TNK2, leading to its degradation.

The protein localises to the cytoplasm. It is found in the nucleus. Its subcellular location is the mitochondrion. It localises to the golgi apparatus. The protein resides in the lysosome. Its function is as follows. Putative oxidoreductase. Acts as a tumor suppressor and plays a role in apoptosis. May function synergistically with p53/TP53 to control genotoxic stress-induced cell death. Plays a role in TGFB1 signaling and TGFB1-mediated cell death. May also play a role in tumor necrosis factor (TNF)-mediated cell death. Required for normal bone development. Inhibits Wnt signaling, probably by sequestering DVL2 in the cytoplasm. The sequence is that of WW domain-containing oxidoreductase (WWOX) from Pongo abelii (Sumatran orangutan).